The sequence spans 139 residues: ATP synthase epsilon chain (139 aa).

It belongs to the ATPase epsilon chain family. F-type ATPases have 2 components, CF(1) - the catalytic core - and CF(0) - the membrane proton channel. CF(1) has five subunits: alpha(3), beta(3), gamma(1), delta(1), epsilon(1). CF(0) has three main subunits: a, b and c.

The protein resides in the cell inner membrane. In terms of biological role, produces ATP from ADP in the presence of a proton gradient across the membrane. The sequence is that of ATP synthase epsilon chain from Alcanivorax borkumensis (strain ATCC 700651 / DSM 11573 / NCIMB 13689 / SK2).